Here is a 338-residue protein sequence, read N- to C-terminus: Putative peptide import ATP-binding protein BMEII0863 (338 aa).

One can recognise an ABC transporter domain in the interval 10 to 263; that stretch reads KGLRTVFRTR…PRHPYTMGLL (254 aa). 43–50 provides a ligand contact to ATP; that stretch reads GESGSGKS.

It belongs to the ABC transporter superfamily. As to quaternary structure, the complex is composed of two ATP-binding proteins (BMEII0863 and BMEII0864), two transmembrane proteins (BMEII0860 and BMEII0861) and a solute-binding protein (BMEII0859).

Its subcellular location is the cell inner membrane. Functionally, probably part of an ABC transporter complex that could be involved in peptide import. Probably responsible for energy coupling to the transport system. The protein is Putative peptide import ATP-binding protein BMEII0863 of Brucella melitensis biotype 1 (strain ATCC 23456 / CCUG 17765 / NCTC 10094 / 16M).